We begin with the raw amino-acid sequence, 230 residues long: Cytochrome c oxidase subunit 2 (230 aa).

The Mitochondrial intermembrane portion of the chain corresponds to Met-1–Ser-14. The chain crosses the membrane as a helical span at residues Pro-15 to Met-45. Residues Val-46 to Gln-59 lie on the Mitochondrial matrix side of the membrane. A helical transmembrane segment spans residues Glu-60–Met-87. The Mitochondrial intermembrane portion of the chain corresponds to Asp-88–Ala-230. Cu cation-binding residues include His-161, Cys-196, Glu-198, Cys-200, His-204, and Met-207. Position 198 (Glu-198) interacts with Mg(2+).

This sequence belongs to the cytochrome c oxidase subunit 2 family. Component of the cytochrome c oxidase (complex IV, CIV), a multisubunit enzyme composed of 14 subunits. The complex is composed of a catalytic core of 3 subunits MT-CO1, MT-CO2 and MT-CO3, encoded in the mitochondrial DNA, and 11 supernumerary subunits COX4I, COX5A, COX5B, COX6A, COX6B, COX6C, COX7A, COX7B, COX7C, COX8 and NDUFA4, which are encoded in the nuclear genome. The complex exists as a monomer or a dimer and forms supercomplexes (SCs) in the inner mitochondrial membrane with NADH-ubiquinone oxidoreductase (complex I, CI) and ubiquinol-cytochrome c oxidoreductase (cytochrome b-c1 complex, complex III, CIII), resulting in different assemblies (supercomplex SCI(1)III(2)IV(1) and megacomplex MCI(2)III(2)IV(2)). Found in a complex with TMEM177, COA6, COX18, COX20, SCO1 and SCO2. Interacts with TMEM177 in a COX20-dependent manner. Interacts with COX20. Interacts with COX16. Cu cation serves as cofactor.

The protein localises to the mitochondrion inner membrane. It catalyses the reaction 4 Fe(II)-[cytochrome c] + O2 + 8 H(+)(in) = 4 Fe(III)-[cytochrome c] + 2 H2O + 4 H(+)(out). Functionally, component of the cytochrome c oxidase, the last enzyme in the mitochondrial electron transport chain which drives oxidative phosphorylation. The respiratory chain contains 3 multisubunit complexes succinate dehydrogenase (complex II, CII), ubiquinol-cytochrome c oxidoreductase (cytochrome b-c1 complex, complex III, CIII) and cytochrome c oxidase (complex IV, CIV), that cooperate to transfer electrons derived from NADH and succinate to molecular oxygen, creating an electrochemical gradient over the inner membrane that drives transmembrane transport and the ATP synthase. Cytochrome c oxidase is the component of the respiratory chain that catalyzes the reduction of oxygen to water. Electrons originating from reduced cytochrome c in the intermembrane space (IMS) are transferred via the dinuclear copper A center (CU(A)) of subunit 2 and heme A of subunit 1 to the active site in subunit 1, a binuclear center (BNC) formed by heme A3 and copper B (CU(B)). The BNC reduces molecular oxygen to 2 water molecules using 4 electrons from cytochrome c in the IMS and 4 protons from the mitochondrial matrix. This chain is Cytochrome c oxidase subunit 2 (MT-CO2), found in Squalus acanthias (Spiny dogfish).